A 238-amino-acid polypeptide reads, in one-letter code: tRNA (guanine-N(7)-)-methyltransferase (238 aa).

4 residues coordinate S-adenosyl-L-methionine: Glu68, Glu93, Asp120, and Asp143. Asp143 is an active-site residue. Substrate is bound by residues Lys147, Asp179, and Thr216 to Glu219.

This sequence belongs to the class I-like SAM-binding methyltransferase superfamily. TrmB family.

It catalyses the reaction guanosine(46) in tRNA + S-adenosyl-L-methionine = N(7)-methylguanosine(46) in tRNA + S-adenosyl-L-homocysteine. It participates in tRNA modification; N(7)-methylguanine-tRNA biosynthesis. In terms of biological role, catalyzes the formation of N(7)-methylguanine at position 46 (m7G46) in tRNA. The polypeptide is tRNA (guanine-N(7)-)-methyltransferase (Shewanella amazonensis (strain ATCC BAA-1098 / SB2B)).